A 444-amino-acid polypeptide reads, in one-letter code: ATPase PAAT (444 aa).

Ser-177, Ser-182, Ser-254, and Ser-302 each carry phosphoserine. The tract at residues 424-444 is disordered; sequence PSPGMPLRHYDSRERLSNGER. A compositionally biased stretch (basic and acidic residues) spans 431-444; that stretch reads RHYDSRERLSNGER.

Homodimer. Interacts with ABCB7, ABCB8/MITOSUR and ABCB10.

The protein localises to the cytoplasm. The protein resides in the mitochondrion. The enzyme catalyses ATP + H2O = ADP + phosphate + H(+). Its function is as follows. ATPase that regulates mitochondrial ABC transporters ABCB7, ABCB8/MITOSUR and ABCB10. Regulates mitochondrial ferric concentration and heme biosynthesis and plays a role in the maintenance of mitochondrial homeostasis and cell survival. The sequence is that of ATPase PAAT from Rattus norvegicus (Rat).